We begin with the raw amino-acid sequence, 236 residues long: SERTA domain-containing protein 1 (236 aa).

Residues 1 to 20 (MLSKGLKRKREEEEEKEPLA) form a disordered region. An SERTA domain is found at 38 to 85 (PAVASSSLFDLSVLKLHHSLQQSEPDLRHLVLVVNTLRRIQASMAPAA). The tract at residues 189 to 211 (PASEGLKPGPEDGPGKEEAPELD) is disordered. The span at 197–207 (GPEDGPGKEEA) shows a compositional bias: basic and acidic residues.

Interacts with the PHD-bromodomain of TIF1, TRIM28/TIF1B and p300/CBP. Interacts with E2F1 and TFDP1; modulates transactivation activity of TFDP1/E2F complexes. Also interacts with CDK4. Polyubiquitinated, which promotes proteasomal degradation.

Acts at E2F-responsive promoters as coregulator to integrate signals provided by PHD- and/or bromodomain-containing transcription factors. Stimulates E2F1/TFDP1 transcriptional activity. Renders the activity of cyclin D1/CDK4 resistant to the inhibitory effects of CDKN2A/p16INK4A. This Homo sapiens (Human) protein is SERTA domain-containing protein 1 (SERTAD1).